The sequence spans 464 residues: Adenosylhomocysteinase (464 aa).

Residues Thr-56, Asp-131, and Glu-190 each contribute to the substrate site. Residue 191–193 (TTT) participates in NAD(+) binding. Substrate contacts are provided by Lys-220 and Asp-224. NAD(+) contacts are provided by residues Asn-225, 254–259 (GFGDVG), Glu-277, Asn-312, 333–335 (IGH), and Asn-378.

It belongs to the adenosylhomocysteinase family. NAD(+) serves as cofactor.

Its subcellular location is the cytoplasm. It carries out the reaction S-adenosyl-L-homocysteine + H2O = L-homocysteine + adenosine. It participates in amino-acid biosynthesis; L-homocysteine biosynthesis; L-homocysteine from S-adenosyl-L-homocysteine: step 1/1. May play a key role in the regulation of the intracellular concentration of adenosylhomocysteine. The polypeptide is Adenosylhomocysteinase (Zymomonas mobilis subsp. mobilis (strain ATCC 31821 / ZM4 / CP4)).